The primary structure comprises 285 residues: 4-diphosphocytidyl-2-C-methyl-D-erythritol kinase (285 aa).

Residue Lys-10 is part of the active site. Position 93–103 (93–103) interacts with ATP; sequence PIGGGLGGGSS. Residue Asp-135 is part of the active site.

The protein belongs to the GHMP kinase family. IspE subfamily.

It catalyses the reaction 4-CDP-2-C-methyl-D-erythritol + ATP = 4-CDP-2-C-methyl-D-erythritol 2-phosphate + ADP + H(+). The protein operates within isoprenoid biosynthesis; isopentenyl diphosphate biosynthesis via DXP pathway; isopentenyl diphosphate from 1-deoxy-D-xylulose 5-phosphate: step 3/6. In terms of biological role, catalyzes the phosphorylation of the position 2 hydroxy group of 4-diphosphocytidyl-2C-methyl-D-erythritol. The protein is 4-diphosphocytidyl-2-C-methyl-D-erythritol kinase of Ruthia magnifica subsp. Calyptogena magnifica.